Here is a 126-residue protein sequence, read N- to C-terminus: Small ribosomal subunit protein uS11 (126 aa).

The protein belongs to the universal ribosomal protein uS11 family. Part of the 30S ribosomal subunit.

Its function is as follows. Located on the platform of the 30S subunit. The chain is Small ribosomal subunit protein uS11 from Methanosarcina mazei (strain ATCC BAA-159 / DSM 3647 / Goe1 / Go1 / JCM 11833 / OCM 88) (Methanosarcina frisia).